A 426-amino-acid polypeptide reads, in one-letter code: Cytochrome c biogenesis protein Ccs1 (426 aa).

The next 3 helical transmembrane spans lie at 11 to 31 (LKFAIALLLLISITITFGSII), 70 to 90 (NFWFISLLLSLGISLIACTFF), and 153 to 173 (IAPVFVHLSIILILLGSIFAS).

It belongs to the Ccs1/CcsB family. In terms of assembly, may interact with CcsA.

Its subcellular location is the plastid. The protein localises to the chloroplast thylakoid membrane. Functionally, required during biogenesis of c-type cytochromes (cytochrome c6 and cytochrome f) at the step of heme attachment. This chain is Cytochrome c biogenesis protein Ccs1, found in Heterosigma akashiwo (strain CCMP452 / OLISTH).